The sequence spans 501 residues: MSTANNKPTESVSLNAFKQPKSFYLIFSIELWERFGYYGLQGIMAVYLVKQLGMSEADSITLFSSFSALVYGLVAIGGWLGDKVLGTKRVIMLGAIVLAIGYGLVAWSGHDVAIVYMGMATIAVGNGLFKANPSSLLSTCYAKDDPRLDGAFTMYYMSINIGSFFSMLATPWLAAKFGWSVAFALSFVGMLITVVNFLFCRSWVKDYGSKPDFEAVHFGKLLATIAGVIVLIAIATWLLHNQGIARMVLGVIALGIVIIFGKEAFAMQGAARRKMIVAFILMLEAIIFFVLYSQMPTSLNFFAIRNVEHTILGIAVEPEQYQALNPFWIIIGSPILAAIYNKMGDTLPMPTKFAIGMVLCSGAFLVLPLGAKFATDAGIVSVNWLILSYGLQSIGELMISGLGLAMVAQLVPQRLMGFIMGSWFLTTAGANLIGGYVAGMMAVPENVTDPLMSLEVYGRVFLQIGVATAVIAALMLITAPKLNRMTQDDEENAKAAKTATA.

The Cytoplasmic portion of the chain corresponds to Met1–Arg34. A helical membrane pass occupies residues Phe35–Ser55. Over Glu56–Ser59 the chain is Periplasmic. A helical transmembrane segment spans residues Ile60–Leu80. The Cytoplasmic segment spans residues Gly81–Arg89. Residues Val90 to His110 form a helical membrane-spanning segment. Residue Asp111 is a topological domain, periplasmic. A helical transmembrane segment spans residues Val112–Asn132. Residues Pro133–Thr153 lie on the Cytoplasmic side of the membrane. The chain crosses the membrane as a helical span at residues Met154–Ala174. Residues Ala175–Gly178 lie on the Periplasmic side of the membrane. Residues Trp179–Phe199 traverse the membrane as a helical segment. Residues Cys200–His217 are Cytoplasmic-facing. Residues Phe218–Leu238 form a helical membrane-spanning segment. Topologically, residues Leu239–Arg246 are periplasmic. The chain crosses the membrane as a helical span at residues Met247 to Met267. At Gln268–Lys274 the chain is on the cytoplasmic side. A helical membrane pass occupies residues Met275–Met295. The Periplasmic portion of the chain corresponds to Pro296–Gln320. The chain crosses the membrane as a helical span at residues Tyr321–Asn341. Residues Lys342 to Lys352 lie on the Cytoplasmic side of the membrane. A helical membrane pass occupies residues Phe353 to Phe373. The Periplasmic segment spans residues Ala374–Asn383. Residues Trp384–Leu404 traverse the membrane as a helical segment. The Cytoplasmic portion of the chain corresponds to Ala405–Arg414. A helical transmembrane segment spans residues Leu415–Gly435. Topologically, residues Tyr436–Arg459 are periplasmic. Residues Val460–Pro480 traverse the membrane as a helical segment. Residues Lys481–Ala501 are Cytoplasmic-facing.

The protein belongs to the major facilitator superfamily. Proton-dependent oligopeptide transporter (POT/PTR) (TC 2.A.17) family. DtpA subfamily.

The protein resides in the cell inner membrane. Its function is as follows. Proton-dependent permease that transports di- and tripeptides. The sequence is that of Dipeptide and tripeptide permease A from Citrobacter koseri (strain ATCC BAA-895 / CDC 4225-83 / SGSC4696).